Consider the following 103-residue polypeptide: Small ribosomal subunit protein uS10 (103 aa).

The protein belongs to the universal ribosomal protein uS10 family. Part of the 30S ribosomal subunit.

Functionally, involved in the binding of tRNA to the ribosomes. This chain is Small ribosomal subunit protein uS10, found in Helicobacter hepaticus (strain ATCC 51449 / 3B1).